A 220-amino-acid chain; its full sequence is Probable nicotinate-nucleotide adenylyltransferase (220 aa).

The protein belongs to the NadD family.

The enzyme catalyses nicotinate beta-D-ribonucleotide + ATP + H(+) = deamido-NAD(+) + diphosphate. It functions in the pathway cofactor biosynthesis; NAD(+) biosynthesis; deamido-NAD(+) from nicotinate D-ribonucleotide: step 1/1. Catalyzes the reversible adenylation of nicotinate mononucleotide (NaMN) to nicotinic acid adenine dinucleotide (NaAD). The protein is Probable nicotinate-nucleotide adenylyltransferase of Saccharophagus degradans (strain 2-40 / ATCC 43961 / DSM 17024).